Reading from the N-terminus, the 162-residue chain is D-aminoacyl-tRNA deacylase (162 aa).

The Gly-cisPro motif, important for rejection of L-amino acids signature appears at 145 to 146; that stretch reads GP.

This sequence belongs to the DTD family. In terms of assembly, homodimer.

The protein localises to the cytoplasm. The catalysed reaction is glycyl-tRNA(Ala) + H2O = tRNA(Ala) + glycine + H(+). It carries out the reaction a D-aminoacyl-tRNA + H2O = a tRNA + a D-alpha-amino acid + H(+). Functionally, an aminoacyl-tRNA editing enzyme that deacylates mischarged D-aminoacyl-tRNAs. Also deacylates mischarged glycyl-tRNA(Ala), protecting cells against glycine mischarging by AlaRS. Acts via tRNA-based rather than protein-based catalysis; rejects L-amino acids rather than detecting D-amino acids in the active site. By recycling D-aminoacyl-tRNA to D-amino acids and free tRNA molecules, this enzyme counteracts the toxicity associated with the formation of D-aminoacyl-tRNA entities in vivo and helps enforce protein L-homochirality. This is D-aminoacyl-tRNA deacylase from Bifidobacterium longum subsp. infantis (strain ATCC 15697 / DSM 20088 / JCM 1222 / NCTC 11817 / S12).